A 518-amino-acid polypeptide reads, in one-letter code: Hyccin (518 aa).

2 disordered regions span residues 385-410 (GLRR…MDQL) and 466-492 (VFSG…EGVA). A compositionally biased stretch (basic and acidic residues) spans 393–403 (SSKEKDKEKDA). Polar residues predominate over residues 466–484 (VFSGNQPSSRASSPTSNHV).

Belongs to the Hyccin family. In terms of assembly, component of a phosphatidylinositol 4-kinase (PI4K) complex.

The protein localises to the cytoplasm. Its subcellular location is the cytosol. It localises to the cell membrane. Its function is as follows. Component of a complex required to localize phosphatidylinositol 4-kinase (PI4K) to the plasma membrane. The complex acts as a regulator of phosphatidylinositol 4-phosphate (PtdIns(4)P) synthesis. The sequence is that of Hyccin (hycc1) from Danio rerio (Zebrafish).